Here is a 337-residue protein sequence, read N- to C-terminus: Eukaryotic translation initiation factor 3 subunit H (337 aa).

One can recognise an MPN domain in the interval 21-153 (VQCDGLAVMK…LKAYRLTPQA (133 aa)).

Belongs to the eIF-3 subunit H family. Component of the eukaryotic translation initiation factor 3 (eIF-3) complex. The eIF-3 complex interacts with pix. Interacts with mxt.

Its subcellular location is the cytoplasm. Functionally, component of the eukaryotic translation initiation factor 3 (eIF-3) complex, which is involved in protein synthesis of a specialized repertoire of mRNAs and, together with other initiation factors, stimulates binding of mRNA and methionyl-tRNAi to the 40S ribosome. The eIF-3 complex specifically targets and initiates translation of a subset of mRNAs involved in cell proliferation. The chain is Eukaryotic translation initiation factor 3 subunit H from Drosophila willistoni (Fruit fly).